Consider the following 418-residue polypeptide: Tektin-1 (418 aa).

Coiled coils occupy residues 21–84, 268–308, and 336–383; these read KNQY…LEQL, LKET…DQEG, and RLIK…ENTI. The disordered stretch occupies residues 399–418; it reads PRDGDDHGEWAGGSHPEAVC.

It belongs to the tektin family. In terms of assembly, microtubule inner protein component of sperm flagellar doublet microtubules. Post-translationally, ubiquitinated, leading to its degradation. Deubiquitinated by USP16, promoting its stability. In terms of tissue distribution, expressed in trachea multiciliated cells.

The protein localises to the cytoplasm. Its subcellular location is the cytoskeleton. It localises to the cilium axoneme. It is found in the flagellum axoneme. Microtubule inner protein (MIP) part of the dynein-decorated doublet microtubules (DMTs) in cilia and flagellar axoneme. Forms filamentous polymers in the walls of ciliary and flagellar microtubules. In Bos taurus (Bovine), this protein is Tektin-1 (TEKT1).